The primary structure comprises 5386 residues: Nonribosomal peptide synthetase 2 (5386 aa).

The segment at 45-435 (HDANAIDFLE…QGLLECLGRV (391 aa)) is adenylation 1. Residues 544–617 (SPKDPIGHSV…DLIEVCRESK (74 aa)) form the Carrier 1 domain. O-(pantetheine 4'-phosphoryl)serine is present on Ser-578. Residues 652 to 1059 (LPCTPLQEAM…VDADRHVSAI (408 aa)) are condensation 1. Residues 1089 to 1482 (EKWAATDPHR…GRTDDQVKIR (394 aa)) form an adenylation 2 region. A Carrier 2 domain is found at 1611–1688 (ELLSQWERDV…SLASLKKLQS (78 aa)). An O-(pantetheine 4'-phosphoryl)serine modification is found at Ser-1648. Residues 1731 to 2141 (ILPCTPLQEA…ALSADTDMFP (411 aa)) are condensation 2. The tract at residues 2166-2551 (FERTALLHPD…GRLDDQVKIR (386 aa)) is adenylation 3. In terms of domain architecture, Carrier 3 spans 2652-2725 (SKTESEVRNI…DLAEHLDQIS (74 aa)). An O-(pantetheine 4'-phosphoryl)serine modification is found at Ser-2686. Positions 2763–3174 (RPCTPLQNGM…HSQIPLAKTD (412 aa)) are condensation 3. The interval 3202–3603 (EKTAQEHPQR…GRADDQVKLR (402 aa)) is adenylation 4. Residues 3728-3805 (EQWSKQEEKL…RLAKSLAANS (78 aa)) enclose the Carrier 4 domain. Ser-3765 is subject to O-(pantetheine 4'-phosphoryl)serine. Residues 3846 to 4250 (LAPCTPLQQG…LDQAINDPSA (405 aa)) form a condensation 4 region. Residues 4281–4357 (FEWSDNAIAI…KMAQNMSMKN (77 aa)) form the Carrier 5 domain. The residue at position 4318 (Ser-4318) is an O-(pantetheine 4'-phosphoryl)serine. A condensation 5 region spans residues 4391–4802 (EEILPLTPLQ…ERAEAPVIDM (412 aa)). The segment at 4821–4842 (HTGSGHVESGEDDGQDTPSTET) is disordered. The region spanning 4840 to 4913 (TETTNRIRKI…KMAKLADARA (74 aa)) is the Carrier 6 domain. Ser-4874 is modified (O-(pantetheine 4'-phosphoryl)serine). The condensation 6 stretch occupies residues 4952-5257 (QMLPVTAGQL…VQAHLRHLND (306 aa)).

Belongs to the NRP synthetase family.

It participates in siderophore biosynthesis. Nonribosomal peptide synthetase; part of the gene cluster that mediates the biosynthesis of hydroxamate-containing siderophores that play a critical role in virulence. Cochliobolus heterostrophus produces extracellular coprogen-type siderophores including coprogen, neocoprogen I and neocoprogen II, as well as the intracellular siderophore ferricrocin. The role of extracellular siderophores is to supply iron to the fungus during plant infection, and the intracellular ferricrocin is required for intracellular iron distribution and storage with a crucial role in ascus and ascospore development. SIDA2 catalyzes the conversion of L-ornithine to N(5)-hydroxyornithine, the first step in the biosynthesis of all hydroxamate-containing siderophores. The assembly of extracellular coprogen-type siderophores is then performed by the nonribosomal peptide synthetase (NRPS) NPS6 whereas the intracellular siderophore ferricrocin is assembled by NPS2. This is Nonribosomal peptide synthetase 2 from Cochliobolus heterostrophus (strain C4 / ATCC 48331 / race T) (Southern corn leaf blight fungus).